Here is a 298-residue protein sequence, read N- to C-terminus: Ribosomal RNA processing protein 36 homolog (298 aa).

The segment at 1-131 (MKPDIIKKRR…SDAPVEMTAM (131 aa)) is disordered. A compositionally biased stretch (acidic residues) spans 14–56 (SDDEDEYNEEDEMYEDDNNNYEEDEDDDDDDDEDDEDDDENEE). Polar residues-rich tracts occupy residues 61 to 70 (QQLSNVSFSS) and 83 to 92 (LNLNTITKNL). Coiled-coil stretches lie at residues 88–112 (ITKN…MNSK) and 196–228 (RERD…KNKL). A compositionally biased stretch (basic and acidic residues) spans 98–111 (FKKEEQQEKEEMNS). The tract at residues 279–298 (ISSKEKTFLPQRRSFDQDEN) is disordered.

Belongs to the RRP36 family.

It is found in the nucleus. Its subcellular location is the nucleolus. In terms of biological role, involved in the early processing steps of the pre-rRNA in the maturation pathway leading to the 18S rRNA. This chain is Ribosomal RNA processing protein 36 homolog, found in Dictyostelium discoideum (Social amoeba).